Here is a 253-residue protein sequence, read N- to C-terminus: MATFAKVMLLLSSVATFGYTFFVVGKLMLFLSTPRSISKAHTWIFNLLDNKSRLETAYGPIVFDTLYLIGFIFQHSFLKSALVKNLWRKLGLAAAERTIYSLTSSICLHYLLKNWLPAQSIVLWQVDVDESAPLWWTFVVTHGLGWAVIFGGSLIMDLPELLGVKQVYYDLKEYGEPVAYKSSELRNLYSHVRHPSFVGLSVILFATNVMSLDRLLLASLLTVYMYVAWSTDDKDVAYQKQQLRNKKHELKAQ.

Topologically, residues 1 to 2 (MA) are nuclear. The chain crosses the membrane as a helical span at residues 3–30 (TFAKVMLLLSSVATFGYTFFVVGKLMLF). Residues 31 to 56 (LSTPRSISKAHTWIFNLLDNKSRLET) lie on the Perinuclear space side of the membrane. The chain crosses the membrane as a helical span at residues 57-78 (AYGPIVFDTLYLIGFIFQHSFL). Over 79–96 (KSALVKNLWRKLGLAAAE) the chain is Nuclear. A helical membrane pass occupies residues 97–113 (RTIYSLTSSICLHYLLK). Topologically, residues 114–132 (NWLPAQSIVLWQVDVDESA) are perinuclear space. Residues 133 to 161 (PLWWTFVVTHGLGWAVIFGGSLIMDLPEL) traverse the membrane as a helical segment. Topologically, residues 162–188 (LGVKQVYYDLKEYGEPVAYKSSELRNL) are nuclear. The chain crosses the membrane as a helical span at residues 189–207 (YSHVRHPSFVGLSVILFAT). The Perinuclear space portion of the chain corresponds to 208-213 (NVMSLD). Residues 214–231 (RLLLASLLTVYMYVAWST) traverse the membrane as a helical segment. The Nuclear portion of the chain corresponds to 232-253 (DDKDVAYQKQQLRNKKHELKAQ).

It belongs to the nurim family.

The protein resides in the nucleus inner membrane. This is Nurim homolog (nrm) from Drosophila pseudoobscura pseudoobscura (Fruit fly).